The primary structure comprises 230 residues: C-methyltransferase CouO (230 aa).

The protein belongs to the methyltransferase superfamily.

The protein operates within antibiotic biosynthesis. Its function is as follows. Mediates C-methylation at the 8-position of the aminocoumarin moieties in coumermycin A1 in the biosynthetic pathway of coumermycin antibiotic. Active on both mono- and bis-amides for mono- and di-C-methylation adjacent to the phenolic hydroxyl before it is glycosylated by CouM. The polypeptide is C-methyltransferase CouO (couO) (Streptomyces rishiriensis).